The primary structure comprises 664 residues: UvrABC system protein B (664 aa).

The region spanning 23-412 (EGLNRGMRFQ…VVEQIIRPTG (390 aa)) is the Helicase ATP-binding domain. 36 to 43 (GVTGSGKT) is a binding site for ATP. Positions 89–112 (YYDYYQPEAYIPTKDLYIEKNADI) match the Beta-hairpin motif. A Helicase C-terminal domain is found at 429 to 588 (DLVNEIVKVK…ITPRSVIKPL (160 aa)). Residues 622–657 (EEYMAVLEEEMYRAASELRYEDAAALRDELFRIREE) form the UVR domain.

It belongs to the UvrB family. Forms a heterotetramer with UvrA during the search for lesions. Interacts with UvrC in an incision complex.

The protein localises to the cytoplasm. The UvrABC repair system catalyzes the recognition and processing of DNA lesions. A damage recognition complex composed of 2 UvrA and 2 UvrB subunits scans DNA for abnormalities. Upon binding of the UvrA(2)B(2) complex to a putative damaged site, the DNA wraps around one UvrB monomer. DNA wrap is dependent on ATP binding by UvrB and probably causes local melting of the DNA helix, facilitating insertion of UvrB beta-hairpin between the DNA strands. Then UvrB probes one DNA strand for the presence of a lesion. If a lesion is found the UvrA subunits dissociate and the UvrB-DNA preincision complex is formed. This complex is subsequently bound by UvrC and the second UvrB is released. If no lesion is found, the DNA wraps around the other UvrB subunit that will check the other stand for damage. The sequence is that of UvrABC system protein B from Thermotoga maritima (strain ATCC 43589 / DSM 3109 / JCM 10099 / NBRC 100826 / MSB8).